A 919-amino-acid polypeptide reads, in one-letter code: Eukaryotic translation initiation factor 3 subunit C (919 aa).

A disordered region spans residues 1-28 (MSRFFANGSDSESESSEEEVQAPNFNKA). The span at 11-20 (SESESSEEEV) shows a compositional bias: acidic residues. Phosphoserine occurs at positions 34, 165, and 177. The segment at 154 to 275 (LSRFRENPQE…EQKIKLRKRA (122 aa)) is disordered. Acidic residues predominate over residues 162–171 (QEESENEDEE). The segment covering 210-236 (ADDEDSDESIDWDPDTESETESSEDEN) has biased composition (acidic residues). A compositionally biased stretch (basic and acidic residues) spans 241–269 (MRERFLKRSTEKDDKDDDKRKDKRKEQKI). Positions 640–816 (FHMHINLELL…ETVVMHRSEP (177 aa)) constitute a PCI domain. Residues 848–919 (FFQRGNMGNR…QQQVQTIDEE (72 aa)) form a disordered region. The segment covering 883 to 894 (QRNRNQRGHHKN) has biased composition (basic residues). Residues 895–919 (QQNQNQQQQQQHQREQQQVQTIDEE) show a composition bias toward low complexity.

This sequence belongs to the eIF-3 subunit C family. Component of the eukaryotic translation initiation factor 3 (eIF-3) complex. The eIF-3 complex interacts with pix.

It is found in the cytoplasm. Functionally, component of the eukaryotic translation initiation factor 3 (eIF-3) complex, which is involved in protein synthesis of a specialized repertoire of mRNAs and, together with other initiation factors, stimulates binding of mRNA and methionyl-tRNAi to the 40S ribosome. The eIF-3 complex specifically targets and initiates translation of a subset of mRNAs involved in cell proliferation. This is Eukaryotic translation initiation factor 3 subunit C from Drosophila willistoni (Fruit fly).